We begin with the raw amino-acid sequence, 154 residues long: MGLSDGEWELVLKTWGKVEADIPGHGETVFVRLFTGHPETLEKFDKFKHLKTEGEMKASEDLKKQGVTVLTALGGILKKKGHHEAEIQPLAQSHATKHKIPIKYLEFISDAIIHVLQSKHPAEFGADAQGAMKKALELFRNDIAAKYKELGFQG.

Residues 2-148 enclose the Globin domain; it reads GLSDGEWELV…FRNDIAAKYK (147 aa). Serine 4 bears the Phosphoserine mark. The residue at position 68 (threonine 68) is a Phosphothreonine. Histidine 94 is a binding site for heme b.

It belongs to the globin family. As to quaternary structure, monomeric.

Its subcellular location is the cytoplasm. It localises to the sarcoplasm. It carries out the reaction Fe(III)-heme b-[protein] + nitric oxide + H2O = Fe(II)-heme b-[protein] + nitrite + 2 H(+). The enzyme catalyses H2O2 + AH2 = A + 2 H2O. Functionally, monomeric heme protein which primary function is to store oxygen and facilitate its diffusion within muscle tissues. Reversibly binds oxygen through a pentacoordinated heme iron and enables its timely and efficient release as needed during periods of heightened demand. Depending on the oxidative conditions of tissues and cells, and in addition to its ability to bind oxygen, it also has a nitrite reductase activity whereby it regulates the production of bioactive nitric oxide. Under stress conditions, like hypoxia and anoxia, it also protects cells against reactive oxygen species thanks to its pseudoperoxidase activity. The chain is Myoglobin (MB) from Elephas maximus (Indian elephant).